A 1068-amino-acid polypeptide reads, in one-letter code: Carbamoyl phosphate synthase large chain (1068 aa).

The segment at 1-401 (MPLNKDIKKV…AFLKGIRSLE (401 aa)) is carboxyphosphate synthetic domain. ATP contacts are provided by Arg129, Arg169, Gly175, Gly176, Lys208, Val210, Glu215, Gly241, Ile242, His243, Gln284, and Glu298. The 195-residue stretch at 133–327 (RNVMSRINEP…IAKVAAKIAL (195 aa)) folds into the ATP-grasp 1 domain. Gln284, Glu298, and Asn300 together coordinate Mg(2+). Residues Gln284, Glu298, and Asn300 each coordinate Mn(2+). Residues 402 to 549 (IGKYSLEHKK…YSTYDVYDEV (148 aa)) form an oligomerization domain region. Residues 550 to 932 (EVSKNKKVIV…ALYKGFIGAN (383 aa)) are carbamoyl phosphate synthetic domain. An ATP-grasp 2 domain is found at 674-864 (DELLEKLQIS…IVDIATRVML (191 aa)). Arg710, Lys749, Leu751, Glu755, Gly780, Val781, His782, Ser783, Gln823, and Glu835 together coordinate ATP. Residues Gln823, Glu835, and Asn837 each contribute to the Mg(2+) site. Mn(2+)-binding residues include Gln823, Glu835, and Asn837. Residues 933–1068 (MSIKKEKGTI…ETLHIFDLSN (136 aa)) form the MGS-like domain. Residues 933–1068 (MSIKKEKGTI…ETLHIFDLSN (136 aa)) are allosteric domain.

Belongs to the CarB family. Composed of two chains; the small (or glutamine) chain promotes the hydrolysis of glutamine to ammonia, which is used by the large (or ammonia) chain to synthesize carbamoyl phosphate. Tetramer of heterodimers (alpha,beta)4. The cofactor is Mg(2+). Mn(2+) serves as cofactor.

It carries out the reaction hydrogencarbonate + L-glutamine + 2 ATP + H2O = carbamoyl phosphate + L-glutamate + 2 ADP + phosphate + 2 H(+). The enzyme catalyses hydrogencarbonate + NH4(+) + 2 ATP = carbamoyl phosphate + 2 ADP + phosphate + 2 H(+). The protein operates within amino-acid biosynthesis; L-arginine biosynthesis; carbamoyl phosphate from bicarbonate: step 1/1. Its pathway is pyrimidine metabolism; UMP biosynthesis via de novo pathway; (S)-dihydroorotate from bicarbonate: step 1/3. In terms of biological role, large subunit of the glutamine-dependent carbamoyl phosphate synthetase (CPSase). CPSase catalyzes the formation of carbamoyl phosphate from the ammonia moiety of glutamine, carbonate, and phosphate donated by ATP, constituting the first step of 2 biosynthetic pathways, one leading to arginine and/or urea and the other to pyrimidine nucleotides. The large subunit (synthetase) binds the substrates ammonia (free or transferred from glutamine from the small subunit), hydrogencarbonate and ATP and carries out an ATP-coupled ligase reaction, activating hydrogencarbonate by forming carboxy phosphate which reacts with ammonia to form carbamoyl phosphate. The polypeptide is Carbamoyl phosphate synthase large chain (Clostridium botulinum (strain Loch Maree / Type A3)).